A 438-amino-acid polypeptide reads, in one-letter code: Probable imidazolonepropionase (438 aa).

The 4-imidazolone-5-propanoate site is built by Y159 and H192. Y159 contributes to the N-formimidoyl-L-glutamate binding site. H260 contacts Fe(3+). H260 lines the Zn(2+) pocket. 4-imidazolone-5-propanoate is bound at residue E263. Fe(3+) is bound at residue D334. Zn(2+) is bound at residue D334. N336 lines the N-formimidoyl-L-glutamate pocket.

It belongs to the metallo-dependent hydrolases superfamily. HutI family. It depends on Zn(2+) as a cofactor. Fe(3+) is required as a cofactor.

The catalysed reaction is 4-imidazolone-5-propanoate + H2O = N-formimidoyl-L-glutamate. It functions in the pathway amino-acid degradation; L-histidine degradation into L-glutamate; N-formimidoyl-L-glutamate from L-histidine: step 3/3. In Xenopus laevis (African clawed frog), this protein is Probable imidazolonepropionase (amdhd1).